A 443-amino-acid polypeptide reads, in one-letter code: Ribosomal protein uS12 methylthiotransferase RimO (443 aa).

The MTTase N-terminal domain occupies 11–121; that stretch reads PTVGFVSLGC…VMEAVHGALP (111 aa). Residues cysteine 20, cysteine 56, cysteine 85, cysteine 152, cysteine 156, and cysteine 159 each coordinate [4Fe-4S] cluster. One can recognise a Radical SAM core domain in the interval 138–375; the sequence is LTPRHYAYLK…METQAEISAA (238 aa). The TRAM domain maps to 378–443; sequence DAKIGRTIEV…DAHDLWATPV (66 aa).

The protein belongs to the methylthiotransferase family. RimO subfamily. The cofactor is [4Fe-4S] cluster.

The protein localises to the cytoplasm. The enzyme catalyses L-aspartate(89)-[ribosomal protein uS12]-hydrogen + (sulfur carrier)-SH + AH2 + 2 S-adenosyl-L-methionine = 3-methylsulfanyl-L-aspartate(89)-[ribosomal protein uS12]-hydrogen + (sulfur carrier)-H + 5'-deoxyadenosine + L-methionine + A + S-adenosyl-L-homocysteine + 2 H(+). Functionally, catalyzes the methylthiolation of an aspartic acid residue of ribosomal protein uS12. The polypeptide is Ribosomal protein uS12 methylthiotransferase RimO (Thiobacillus denitrificans (strain ATCC 25259 / T1)).